Consider the following 177-residue polypeptide: Putative peroxiredoxin (177 aa).

The region spanning 8–177 is the Thioredoxin domain; that stretch reads TAKGNEIPDT…ASIDTILTKV (170 aa). The active-site Cysteine sulfenic acid (-SOH) intermediate is the Cys-64. The Microbody targeting signal motif lies at 175–177; it reads TKV.

Belongs to the peroxiredoxin family. Prx5 subfamily. As to quaternary structure, homodimer; disulfide-linked, upon oxidation.

It carries out the reaction a hydroperoxide + [thioredoxin]-dithiol = an alcohol + [thioredoxin]-disulfide + H2O. Its function is as follows. Thiol-specific peroxidase that catalyzes the reduction of hydrogen peroxide and organic hydroperoxides to water and alcohols, respectively. Plays a role in cell protection against oxidative stress by detoxifying peroxides and as sensor of hydrogen peroxide-mediated signaling events. The polypeptide is Putative peroxiredoxin (Malassezia furfur (Pityriasis versicolor infection agent)).